We begin with the raw amino-acid sequence, 246 residues long: Putative 4'-phosphopantetheinyl transferase slr0495 (246 aa).

The Mg(2+) site is built by Asp-110 and Glu-156.

This sequence belongs to the P-Pant transferase superfamily. Gsp/Sfp/HetI/AcpT family. It depends on Mg(2+) as a cofactor.

Functionally, probably transfers the 4'-phosphopantetheine moiety from coenzyme A (CoA) to a serine residue of a carrier protein domain. The chain is Putative 4'-phosphopantetheinyl transferase slr0495 from Synechocystis sp. (strain ATCC 27184 / PCC 6803 / Kazusa).